The sequence spans 418 residues: UDP-N-acetylglucosamine 1-carboxyvinyltransferase (418 aa).

A phosphoenolpyruvate-binding site is contributed by 22-23; sequence KN. R92 serves as a coordination point for UDP-N-acetyl-alpha-D-glucosamine. C116 serves as the catalytic Proton donor. The residue at position 116 (C116) is a 2-(S-cysteinyl)pyruvic acid O-phosphothioketal. UDP-N-acetyl-alpha-D-glucosamine contacts are provided by residues 121–125, D306, and I328; that span reads RPVDQ.

The protein belongs to the EPSP synthase family. MurA subfamily.

It is found in the cytoplasm. The catalysed reaction is phosphoenolpyruvate + UDP-N-acetyl-alpha-D-glucosamine = UDP-N-acetyl-3-O-(1-carboxyvinyl)-alpha-D-glucosamine + phosphate. It functions in the pathway cell wall biogenesis; peptidoglycan biosynthesis. Functionally, cell wall formation. Adds enolpyruvyl to UDP-N-acetylglucosamine. This chain is UDP-N-acetylglucosamine 1-carboxyvinyltransferase, found in Acinetobacter baylyi (strain ATCC 33305 / BD413 / ADP1).